Consider the following 438-residue polypeptide: Mannose-1-phosphate guanylyltransferase regulatory subunit alpha (438 aa).

The segment at 2–260 (LKAVILIGGP…PNWWSQLKTA (259 aa)) is substrate-binding domain. 2 residues coordinate GDP-alpha-D-mannose: E87 and Q256. Positions 282–438 (LANVGIKRGE…SRSFKNEIIL (157 aa)) are hexapeptide repeat domain. Positions 373-402 (TPSDPDPNKPFAKMENPPLFNNEGKLNPSI) are C-loop.

Belongs to the transferase hexapeptide repeat family. As to quaternary structure, component of the GMPPA-GMPPB mannose-1-phosphate guanylyltransferase complex composed of 4 GMPPA subunits and 8 GMPPB subunits; the complex is organized into three layers, a central layer made up of 2 GMPPA dimers sandwiched between two layers each made up of 2 GMPPB dimers.

Functionally, regulatory subunit of the GMPPA-GMPPB mannose-1-phosphate guanylyltransferase complex; reduces the catalytic activity of GMPPB when part of the complex. Mediates allosteric feedback inhibition of GMPPB catalytic activity upon binding GDP-alpha-D-mannose. Together with GMPPB regulates GDP-alpha-D-mannose levels. The sequence is that of Mannose-1-phosphate guanylyltransferase regulatory subunit alpha from Drosophila melanogaster (Fruit fly).